The following is a 156-amino-acid chain: MHCPFCSETDTKVIDSRLVADGAQVRRRRECLTCHDRFTTFETAELVMPRVIKQDGTREPFDEEKLRAGLQRALEKRPVSVEAIESSVQNVKHYLQALGEREVKSLMIGEKVMEELRSLDQVAYVRFASVYRSFQDLSEFQQEIDRLQKPKPSPIK.

A zinc finger spans residues 3–34; the sequence is CPFCSETDTKVIDSRLVADGAQVRRRRECLTC. The ATP-cone domain occupies 49 to 139; that stretch reads PRVIKQDGTR…VYRSFQDLSE (91 aa).

It belongs to the NrdR family. Zn(2+) serves as cofactor.

Its function is as follows. Negatively regulates transcription of bacterial ribonucleotide reductase nrd genes and operons by binding to NrdR-boxes. The polypeptide is Transcriptional repressor NrdR (Saccharophagus degradans (strain 2-40 / ATCC 43961 / DSM 17024)).